A 965-amino-acid chain; its full sequence is Villin-3 (965 aa).

Gelsolin-like repeat units lie at residues 27–79, 150–190, 262–304, 401–452, 533–573, and 635–676; these read ENFE…DEAG, VHLK…QERA, GQVE…EERK, ANSK…EDQE, NKAL…EQQE, and FQVE…KEKQ. 2 stretches are compositionally biased toward low complexity: residues 769–780 and 808–828; these read AFNSSSGRTSSP and SSPS…ASQR. Disordered stretches follow at residues 769-828 and 840-906; these read AFNS…ASQR and TAEK…GVTF. A compositionally biased stretch (acidic residues) spans 865–879; it reads EATEEATEAKEEEEV. Ser-880 is subject to Phosphoserine. The HP domain maps to 900 to 965; sequence ETTGVTFTYE…DLLKKKFNLF (66 aa).

It belongs to the villin/gelsolin family. Expressed in all tissues examined, including root hairs.

Its subcellular location is the cytoplasm. The protein resides in the cytoskeleton. Its function is as follows. Binds actin and actin filament bundles in a Ca(2+)-insensitive manner, but severs actin filaments in a calcium-dependent manner, regardless of the presence or not of VLN1 (AC O81643). Acts redundantly with VLN2 (AC O81644) to generate thick actin filament bundles, to regulate directional organ growth and in sclerenchyma development. The sequence is that of Villin-3 from Arabidopsis thaliana (Mouse-ear cress).